A 261-amino-acid polypeptide reads, in one-letter code: uncharacterized protein (261 aa).

This is an uncharacterized protein from Methanocaldococcus jannaschii (strain ATCC 43067 / DSM 2661 / JAL-1 / JCM 10045 / NBRC 100440) (Methanococcus jannaschii).